Here is a 425-residue protein sequence, read N- to C-terminus: Glutamate-1-semialdehyde 2,1-aminomutase (425 aa).

At Lys-265 the chain carries N6-(pyridoxal phosphate)lysine.

It belongs to the class-III pyridoxal-phosphate-dependent aminotransferase family. HemL subfamily. In terms of assembly, homodimer. Pyridoxal 5'-phosphate is required as a cofactor.

The protein resides in the cytoplasm. It catalyses the reaction (S)-4-amino-5-oxopentanoate = 5-aminolevulinate. It functions in the pathway porphyrin-containing compound metabolism; protoporphyrin-IX biosynthesis; 5-aminolevulinate from L-glutamyl-tRNA(Glu): step 2/2. The sequence is that of Glutamate-1-semialdehyde 2,1-aminomutase from Nitrosospira multiformis (strain ATCC 25196 / NCIMB 11849 / C 71).